A 432-amino-acid chain; its full sequence is MSTFDLTQRMAPFLDLHLIIPLLEFIEPRGIYDEKSLTEMHRQLLTKTNMIDSVIETYNGKPIPAAIEAKKKQIIKERDELKSKVDSVVAILEIPEVKEMMDNNRERDGNVRILEHLTQNHNFTVDMVDTLFKYSKFMYECGNYTVASVCLYYYRNLVNQADPNYLNALYGKLASEILLQEWEHARDDLLKLRAYIDANPFDTEWELVTQRAWLMHWALFVYYNYPKGRDEIIEMFLNQQPYLNAIQVLAPHLLRYLAVAVVTSKSRQKNSLKDLVKVIDIERHSYKDPVTDFLTCLYIKYDFDEAQEMLQKCEEVLSNDFFLTAVLGDFRESARLLIFEMFCRIHQCITIEMLARRLNMSQEEAERWIVDLIRTYRIEGAKIDSKLGQVVMGVKSVSIHEQVMENTKRLTLRAQQIALQLEKGRQDKVKAT.

One can recognise a PCI domain in the interval Val-221–Glu-401.

Belongs to the eIF-3 subunit E family. Component of the eukaryotic translation initiation factor 3 (eIF-3) complex.

Its subcellular location is the cytoplasm. Component of the eukaryotic translation initiation factor 3 (eIF-3) complex, which is involved in protein synthesis of a specialized repertoire of mRNAs and, together with other initiation factors, stimulates binding of mRNA and methionyl-tRNAi to the 40S ribosome. The eIF-3 complex specifically targets and initiates translation of a subset of mRNAs involved in cell proliferation. This Caenorhabditis elegans protein is Eukaryotic translation initiation factor 3 subunit E.